Consider the following 242-residue polypeptide: MNDVIIRQLAHLIPYQPLWEAMQTFTARRQSQTTDEIWFLEHEPVFTQGLAGKPEHVLNSGNIPLIRTDRGGQVTYHGPGQLMMYLLLDLNRLGLSTRTFVRTIENTVAESLQEWGIPAQGKETAPGVYVDDKKICSIGLRVRKGFSYHGLALNVAMDLTPFSCINPCGFKGLMMTQIQDYVNPIEMDAVKRTIIPLFLKNFGYNQPAIMVETSLEFLIDDHLRSFSEKLGERETVTNSRQN.

Residues 31–206 (SQTTDEIWFL…LFLKNFGYNQ (176 aa)) form the BPL/LPL catalytic domain. Residues 70–77 (RGGQVTYH), 137–139 (SIG), and 150–152 (GLA) each bind substrate. C168 acts as the Acyl-thioester intermediate in catalysis.

Belongs to the LipB family.

The protein localises to the cytoplasm. The enzyme catalyses octanoyl-[ACP] + L-lysyl-[protein] = N(6)-octanoyl-L-lysyl-[protein] + holo-[ACP] + H(+). Its pathway is protein modification; protein lipoylation via endogenous pathway; protein N(6)-(lipoyl)lysine from octanoyl-[acyl-carrier-protein]: step 1/2. Functionally, catalyzes the transfer of endogenously produced octanoic acid from octanoyl-acyl-carrier-protein onto the lipoyl domains of lipoate-dependent enzymes. Lipoyl-ACP can also act as a substrate although octanoyl-ACP is likely to be the physiological substrate. In Coxiella burnetii (strain CbuG_Q212) (Coxiella burnetii (strain Q212)), this protein is Octanoyltransferase.